We begin with the raw amino-acid sequence, 134 residues long: Profilin-2 (134 aa).

C13 and C118 are joined by a disulfide. The Involved in PIP2 interaction motif lies at 84–100 (AVIRGKKGSGGITIKET). A Phosphothreonine modification is found at T114.

This sequence belongs to the profilin family. As to quaternary structure, occurs in many kinds of cells as a complex with monomeric actin in a 1:1 ratio. Post-translationally, phosphorylated by MAP kinases.

The protein resides in the cytoplasm. It is found in the cytoskeleton. In terms of biological role, binds to actin and affects the structure of the cytoskeleton. At high concentrations, profilin prevents the polymerization of actin, whereas it enhances it at low concentrations. In Olea europaea (Common olive), this protein is Profilin-2.